Consider the following 232-residue polypeptide: uncharacterized protein (232 aa).

The next 5 helical transmembrane spans lie at 4-24, 42-62, 100-120, 145-165, and 171-191; these read LLGV…YVFE, VLVG…LAVL, LFFI…ILHM, LAFV…FFTL, and GNLI…WVGF.

Its subcellular location is the cell membrane. This is an uncharacterized protein from Aquifex aeolicus (strain VF5).